The following is a 181-amino-acid chain: ADP-ribosylation factor 1 (181 aa).

A lipid anchor (N-myristoyl glycine) is attached at G2. The important for the stable binding to the membranes stretch occupies residues 3 to 16 (NMFANLFKGLFGKK). Residues 24 to 32 (GLDAAGKTT), 126 to 129 (NKQD), and A160 each bind GTP.

Belongs to the small GTPase superfamily. Arf family.

It localises to the golgi apparatus membrane. The catalysed reaction is GTP + H2O = GDP + phosphate + H(+). Alternates between an inactive GDP-bound form and an active GTP-bound form. Activated by a guanine nucleotide-exchange factor (GEF) and inactivated by GTPase-activating protein (GAP). Functionally, small GTPase involved in protein trafficking between different compartments. Modulates vesicle budding and uncoating within the Golgi complex. In its GTP-bound form, triggers the recruitment of coatomer proteins to the Golgi membrane. The hydrolysis of ARF1-bound GTP, which is mediated by ARFGAPs proteins, is required for dissociation of coat proteins from Golgi membranes and vesicles. In Xenopus laevis (African clawed frog), this protein is ADP-ribosylation factor 1 (arf1).